A 488-amino-acid chain; its full sequence is Cruciferin (488 aa).

The N-terminal stretch at 1-23 (MARLSSLLSFSLALLTFLHGSTA) is a signal peptide. Cystine bridges form between C30–C63 and C105–C305. Cupin type-1 domains lie at 35–262 (LNAL…RTAQ) and 311–460 (DNLD…EEAR). The interval 116–163 (QPSGGSPFGEGQGQGQQGQGQGHQGQGQGQQGQQGQQGQQSQGQGFRD) is disordered. Residues 121-147 (SPFGEGQGQGQQGQGQGHQGQGQGQQG) are compositionally biased toward gly residues. Residues 148–160 (QQGQQGQQSQGQG) are compositionally biased toward low complexity.

Belongs to the 11S seed storage protein (globulins) family. Hexamer; each subunit is composed of an acidic and a basic chain derived from a single precursor and linked by a disulfide bond.

Its subcellular location is the rough endoplasmic reticulum. In terms of biological role, this is a seed storage protein. This is Cruciferin (CRUA) from Brassica napus (Rape).